Consider the following 652-residue polypeptide: DNA ligase (652 aa).

NAD(+) contacts are provided by residues 29 to 33 (DQEYD), 78 to 79 (SL), and E107. K109 acts as the N6-AMP-lysine intermediate in catalysis. NAD(+) is bound by residues R130, E164, K278, and K302. Zn(2+) contacts are provided by C395, C398, C413, and C418. The region spanning 577-652 (DTSAQLFGLT…VKDENWLLQL (76 aa)) is the BRCT domain.

Belongs to the NAD-dependent DNA ligase family. LigA subfamily. Requires Mg(2+) as cofactor. Mn(2+) serves as cofactor.

The enzyme catalyses NAD(+) + (deoxyribonucleotide)n-3'-hydroxyl + 5'-phospho-(deoxyribonucleotide)m = (deoxyribonucleotide)n+m + AMP + beta-nicotinamide D-nucleotide.. Functionally, DNA ligase that catalyzes the formation of phosphodiester linkages between 5'-phosphoryl and 3'-hydroxyl groups in double-stranded DNA using NAD as a coenzyme and as the energy source for the reaction. It is essential for DNA replication and repair of damaged DNA. This chain is DNA ligase, found in Streptococcus uberis (strain ATCC BAA-854 / 0140J).